We begin with the raw amino-acid sequence, 116 residues long: Fluoride-specific ion channel FluC 1 (116 aa).

4 consecutive transmembrane segments (helical) span residues 2 to 22 (LVLV…RYGI), 33 to 53 (PLPI…GWIL), 63 to 83 (IFLG…INEL), and 96 to 116 (WEYF…GTLI). Na(+) is bound by residues Gly71 and Thr74.

It belongs to the fluoride channel Fluc/FEX (TC 1.A.43) family.

The protein resides in the cell membrane. The catalysed reaction is fluoride(in) = fluoride(out). With respect to regulation, na(+) is not transported, but it plays an essential structural role and its presence is essential for fluoride channel function. In terms of biological role, fluoride-specific ion channel. Important for reducing fluoride concentration in the cell, thus reducing its toxicity. This chain is Fluoride-specific ion channel FluC 1, found in Lactiplantibacillus plantarum (strain ATCC BAA-793 / NCIMB 8826 / WCFS1) (Lactobacillus plantarum).